The chain runs to 159 residues: 2-C-methyl-D-erythritol 2,4-cyclodiphosphate synthase (159 aa).

A divalent metal cation contacts are provided by Asp10 and His12. 4-CDP-2-C-methyl-D-erythritol 2-phosphate is bound by residues 10-12 and 36-37; these read DVH and HS. A divalent metal cation is bound at residue His44. Residues 58–60, 63–67, 102–108, 134–137, Phe141, and Arg144 contribute to the 4-CDP-2-C-methyl-D-erythritol 2-phosphate site; these read DIG, FPDTD, AQAPKMA, and TTTE.

This sequence belongs to the IspF family. As to quaternary structure, homotrimer. The cofactor is a divalent metal cation.

It carries out the reaction 4-CDP-2-C-methyl-D-erythritol 2-phosphate = 2-C-methyl-D-erythritol 2,4-cyclic diphosphate + CMP. Its pathway is isoprenoid biosynthesis; isopentenyl diphosphate biosynthesis via DXP pathway; isopentenyl diphosphate from 1-deoxy-D-xylulose 5-phosphate: step 4/6. Involved in the biosynthesis of isopentenyl diphosphate (IPP) and dimethylallyl diphosphate (DMAPP), two major building blocks of isoprenoid compounds. Catalyzes the conversion of 4-diphosphocytidyl-2-C-methyl-D-erythritol 2-phosphate (CDP-ME2P) to 2-C-methyl-D-erythritol 2,4-cyclodiphosphate (ME-CPP) with a corresponding release of cytidine 5-monophosphate (CMP). The chain is 2-C-methyl-D-erythritol 2,4-cyclodiphosphate synthase from Shewanella halifaxensis (strain HAW-EB4).